Here is an 887-residue protein sequence, read N- to C-terminus: Inter-alpha-trypsin inhibitor heavy chain H3 (887 aa).

A signal peptide spans 1 to 21; it reads MVTLWWPCLVLALLSGLETSG. Positions 22-33 are excised as a propeptide; that stretch reads FPRSPLRLLGKR. The VIT domain occupies 29–158; sequence LLGKRSLPEG…KVIFELTYEE (130 aa). Residue Asn-91 is glycosylated (N-linked (GlcNAc...) asparagine). The VWFA domain maps to 282–442; that stretch reads PKNIAFVIDV…YNFLESLALE (161 aa). An N-linked (GlcNAc...) asparagine glycan is attached at Asn-580. Position 647 is an aspartate 1-(chondroitin 4-sulfate)-ester (Asp-647). Positions 648-887 are excised as a propeptide; it reads PHFIIQVPGK…HTDYIVPSLF (240 aa).

The protein belongs to the ITIH family. As to quaternary structure, I-alpha-I plasma protease inhibitors are assembled from one or two heavy chains (HC) and one light chain, bikunin. Pre-alpha-inhibitor (P-alpha-I) is composed of ITIH3/HC3 and bikunin. In terms of processing, heavy chains are linked to bikunin via chondroitin 4-sulfate esterified to the alpha-carboxyl of the C-terminal aspartate after propeptide cleavage.

It localises to the secreted. In terms of biological role, may act as a carrier of hyaluronan in serum or as a binding protein between hyaluronan and other matrix protein, including those on cell surfaces in tissues to regulate the localization, synthesis and degradation of hyaluronan which are essential to cells undergoing biological processes. The protein is Inter-alpha-trypsin inhibitor heavy chain H3 (Itih3) of Rattus norvegicus (Rat).